The primary structure comprises 407 residues: Probable tRNA sulfurtransferase (407 aa).

The THUMP domain maps to 61–165 (EEMCNRLKKV…LDAIYMYDQV (105 aa)). ATP contacts are provided by residues 183–184 (ML), 208–209 (HF), Arg265, Gly287, and Gln296.

This sequence belongs to the ThiI family.

It is found in the cytoplasm. The enzyme catalyses [ThiI sulfur-carrier protein]-S-sulfanyl-L-cysteine + a uridine in tRNA + 2 reduced [2Fe-2S]-[ferredoxin] + ATP + H(+) = [ThiI sulfur-carrier protein]-L-cysteine + a 4-thiouridine in tRNA + 2 oxidized [2Fe-2S]-[ferredoxin] + AMP + diphosphate. It catalyses the reaction [ThiS sulfur-carrier protein]-C-terminal Gly-Gly-AMP + S-sulfanyl-L-cysteinyl-[cysteine desulfurase] + AH2 = [ThiS sulfur-carrier protein]-C-terminal-Gly-aminoethanethioate + L-cysteinyl-[cysteine desulfurase] + A + AMP + 2 H(+). The protein operates within cofactor biosynthesis; thiamine diphosphate biosynthesis. Functionally, catalyzes the ATP-dependent transfer of a sulfur to tRNA to produce 4-thiouridine in position 8 of tRNAs, which functions as a near-UV photosensor. Also catalyzes the transfer of sulfur to the sulfur carrier protein ThiS, forming ThiS-thiocarboxylate. This is a step in the synthesis of thiazole, in the thiamine biosynthesis pathway. The sulfur is donated as persulfide by IscS. This chain is Probable tRNA sulfurtransferase, found in Staphylococcus saprophyticus subsp. saprophyticus (strain ATCC 15305 / DSM 20229 / NCIMB 8711 / NCTC 7292 / S-41).